The following is a 361-amino-acid chain: Ribosomal RNA large subunit methyltransferase M (361 aa).

Residues serine 193, 226–229 (CPGG), aspartate 245, aspartate 265, and aspartate 283 contribute to the S-adenosyl-L-methionine site. Lysine 312 acts as the Proton acceptor in catalysis.

This sequence belongs to the class I-like SAM-binding methyltransferase superfamily. RNA methyltransferase RlmE family. RlmM subfamily. Monomer.

It is found in the cytoplasm. It catalyses the reaction cytidine(2498) in 23S rRNA + S-adenosyl-L-methionine = 2'-O-methylcytidine(2498) in 23S rRNA + S-adenosyl-L-homocysteine + H(+). Catalyzes the 2'-O-methylation at nucleotide C2498 in 23S rRNA. This is Ribosomal RNA large subunit methyltransferase M from Histophilus somni (strain 2336) (Haemophilus somnus).